We begin with the raw amino-acid sequence, 141 residues long: Phosphoribosyl-AMP cyclohydrolase (141 aa).

Asp-88 serves as a coordination point for Mg(2+). Cys-89 contributes to the Zn(2+) binding site. Positions 90 and 92 each coordinate Mg(2+). Residues Cys-109 and Cys-116 each contribute to the Zn(2+) site.

It belongs to the PRA-CH family. As to quaternary structure, homodimer. Requires Mg(2+) as cofactor. It depends on Zn(2+) as a cofactor.

The protein resides in the cytoplasm. The catalysed reaction is 1-(5-phospho-beta-D-ribosyl)-5'-AMP + H2O = 1-(5-phospho-beta-D-ribosyl)-5-[(5-phospho-beta-D-ribosylamino)methylideneamino]imidazole-4-carboxamide. Its pathway is amino-acid biosynthesis; L-histidine biosynthesis; L-histidine from 5-phospho-alpha-D-ribose 1-diphosphate: step 3/9. Catalyzes the hydrolysis of the adenine ring of phosphoribosyl-AMP. The sequence is that of Phosphoribosyl-AMP cyclohydrolase from Paracidovorax citrulli (strain AAC00-1) (Acidovorax citrulli).